A 103-amino-acid polypeptide reads, in one-letter code: Serine protease inhibitor 4 (103 aa).

Cys-56 and Cys-73 form a disulfide bridge.

This sequence belongs to the protease inhibitor I3 (leguminous Kunitz-type inhibitor) family.

Its subcellular location is the vacuole. In terms of biological role, inhibitor of serine protease. May protect the plant by inhibiting proteases of invading organisms. In Solanum tuberosum (Potato), this protein is Serine protease inhibitor 4.